Reading from the N-terminus, the 319-residue chain is MPPHAARPGPAQNRRGRAMAVITPRRERSSLLSRALRFTAAAATALVTAVSLAAPAHAANPYERGPNPTDALLEARSGPFSVSEERASRFGADGFGGGTIYYPRENNTYGAVAISPGYTGTQASVAWLGERIASHGFVVITIDTNTTLDQPDSRARQLNAALDYMINDASSAVRSRIDSSRLAVMGHSMGGGGTLRLASQRPDLKAAIPLTPWHLNKNWSSVRVPTLIIGADLDTIAPVLTHARPFYNSLPTSISKAYLELDGATHFAPNIPNKIIGKYSVAWLKRFVDNDTRYTQFLCPGPRDGLFGEVEEYRSTCPF.

The N-terminal stretch at 1–58 (MPPHAARPGPAQNRRGRAMAVITPRRERSSLLSRALRFTAAAATALVTAVSLAAPAHA) is a signal peptide. Residue tyrosine 118 coordinates poly(ethylene terephthalate). Serine 188 serves as the catalytic Nucleophile. Methionine 189 and tryptophan 213 together coordinate poly(ethylene terephthalate). Active-site charge relay system residues include aspartate 234 and histidine 266. Residues cysteine 299 and cysteine 317 are joined by a disulfide bond.

The protein belongs to the AB hydrolase superfamily.

The protein localises to the secreted. The protein resides in the periplasm. The enzyme catalyses an acetyl ester + H2O = an aliphatic alcohol + acetate + H(+). The catalysed reaction is a butanoate ester + H2O = an aliphatic alcohol + butanoate + H(+). It carries out the reaction pentanoate ester + H2O = pentanoate + an aliphatic alcohol + H(+). It catalyses the reaction an octanoate ester + H2O = an aliphatic alcohol + octanoate + H(+). The enzyme catalyses decanoate ester + H2O = decanoate + an aliphatic alcohol + H(+). The catalysed reaction is a dodecanoate ester + H2O = an aliphatic alcohol + dodecanoate + H(+). It carries out the reaction a tetradecanoate ester + H2O = an aliphatic alcohol + tetradecanoate + H(+). It catalyses the reaction hexadecanoate ester + H2O = an aliphatic alcohol + hexadecanoate + H(+). The enzyme catalyses cutin + H2O = cutin monomers.. The catalysed reaction is (ethylene terephthalate)(n) + H2O = (ethylene terephthalate)(n-1) + 4-[(2-hydroxyethoxy)carbonyl]benzoate + H(+). Activated by magnesium ions. Activated by calcium ions. Functionally, catalyzes the hydrolysis of cutin, a polyester that forms the structure of plant cuticle. Shows esterase activity towards p-nitrophenol-linked aliphatic esters (pNP-aliphatic esters). Capable of degrading the plastic poly(ethylene terephthalate) (PET), the most abundant polyester plastic in the world. This chain is Cutinase cut1, found in Thermobifida fusca (Thermomonospora fusca).